Here is a 251-residue protein sequence, read N- to C-terminus: Ditrans,polycis-undecaprenyl-diphosphate synthase ((2E,6E)-farnesyl-diphosphate specific) (251 aa).

Asp20 is an active-site residue. Asp20 provides a ligand contact to Mg(2+). Residues 21 to 24 (GNGR), Trp25, Arg33, His37, and 65 to 67 (SSE) contribute to the substrate site. The active-site Proton acceptor is the Asn68. Substrate is bound by residues Trp69, Arg71, Arg188, and 194–196 (RIS). Residue Glu207 participates in Mg(2+) binding.

Belongs to the UPP synthase family. In terms of assembly, homodimer. Requires Mg(2+) as cofactor.

The enzyme catalyses 8 isopentenyl diphosphate + (2E,6E)-farnesyl diphosphate = di-trans,octa-cis-undecaprenyl diphosphate + 8 diphosphate. Catalyzes the sequential condensation of isopentenyl diphosphate (IPP) with (2E,6E)-farnesyl diphosphate (E,E-FPP) to yield (2Z,6Z,10Z,14Z,18Z,22Z,26Z,30Z,34E,38E)-undecaprenyl diphosphate (di-trans,octa-cis-UPP). UPP is the precursor of glycosyl carrier lipid in the biosynthesis of bacterial cell wall polysaccharide components such as peptidoglycan and lipopolysaccharide. The sequence is that of Ditrans,polycis-undecaprenyl-diphosphate synthase ((2E,6E)-farnesyl-diphosphate specific) from Vibrio parahaemolyticus serotype O3:K6 (strain RIMD 2210633).